The following is a 202-amino-acid chain: Small ribosomal subunit protein uS4 (202 aa).

The interval 21–42 is disordered; sequence LSRKSPRRAYPPGQHGQARRKR. One can recognise an S4 RNA-binding domain in the interval 90–152; sequence MRLDNTVFRL…DRSRKLVETN (63 aa).

Belongs to the universal ribosomal protein uS4 family. As to quaternary structure, part of the 30S ribosomal subunit. Contacts protein S5. The interaction surface between S4 and S5 is involved in control of translational fidelity.

In terms of biological role, one of the primary rRNA binding proteins, it binds directly to 16S rRNA where it nucleates assembly of the body of the 30S subunit. Its function is as follows. With S5 and S12 plays an important role in translational accuracy. In Synechocystis sp. (strain ATCC 27184 / PCC 6803 / Kazusa), this protein is Small ribosomal subunit protein uS4.